The sequence spans 164 residues: IQ domain-containing protein F2 (164 aa).

IQ domains follow at residues 43–72 (RTKA…RAWI) and 99–128 (RERA…AIYI).

This Homo sapiens (Human) protein is IQ domain-containing protein F2 (IQCF2).